The following is a 446-amino-acid chain: Maltoporin (446 aa).

Residues 1 to 25 form the signal peptide; sequence MMITLRKLPLAVAVAAGVMSAQAMA.

This sequence belongs to the porin LamB (TC 1.B.3) family. In terms of assembly, homotrimer formed of three 18-stranded antiparallel beta-barrels, containing three independent channels.

The protein resides in the cell outer membrane. The enzyme catalyses beta-maltose(in) = beta-maltose(out). Its function is as follows. Involved in the transport of maltose and maltodextrins. In Escherichia coli O157:H7 (strain EC4115 / EHEC), this protein is Maltoporin.